Here is a 530-residue protein sequence, read N- to C-terminus: Vesicular acetylcholine transporter (530 aa).

Over 1–33 (MEPTAPTGQARAAATKLSEAVGAALQEPQRQRR) the chain is Cytoplasmic. Residues 34–54 (LVLVIVCVALLLDNMLYMVIV) form a helical membrane-spanning segment. At 55–125 (PIVPDYIAHM…PTESEDVKIG (71 aa)) the chain is on the lumenal, vesicle side. Residues Asn-89 and Asn-96 are each glycosylated (N-linked (GlcNAc...) asparagine). Residues 126-146 (VLFASKAILQLLVNPLSGPFI) traverse the membrane as a helical segment. Residues 147–152 (DRMSYD) lie on the Cytoplasmic side of the membrane. Residues 153–173 (VPLLIGLGVMFASTVMFAFAE) form a helical membrane-spanning segment. The Lumenal, vesicle portion of the chain corresponds to 174 to 182 (DYATFFAAR). The chain crosses the membrane as a helical span at residues 183–203 (SLQGLGSAFADTSGIAMIADK). Over 204-213 (YPEEPERSRA) the chain is Cytoplasmic. A helical membrane pass occupies residues 214 to 234 (LGVALAFISFGSLVAPPFGGI). The Lumenal, vesicle segment spans residues 235 to 242 (LYEFAGKR). A helical membrane pass occupies residues 243 to 263 (VPFLVLAAVSLFDALLLLAVA). At 264-288 (KPFSAAARARANLPVGTPIHRLMLD) the chain is on the cytoplasmic side. A helical transmembrane segment spans residues 289 to 309 (PYIAVVAGALTTCNIPLAFLE). Over 310–325 (PTIATWMKHTMAASEW) the chain is Lumenal, vesicle. A helical membrane pass occupies residues 326–346 (EMGMVWLPAFVPHVLGVYLTV). At 347-356 (RLAARYPHLQ) the chain is on the cytoplasmic side. A helical transmembrane segment spans residues 357 to 377 (WLYGALGLAVIGVSSCVVPAC). The Lumenal, vesicle segment spans residues 378 to 388 (RSFAPLVVSLC). The helical transmembrane segment at 389–409 (GLCFGIALVDTALLPTLAFLV) threads the bilayer. Topologically, residues 410–422 (DVRHVSVYGSVYA) are cytoplasmic. The helical transmembrane segment at 423–443 (IADISYSVAYALGPIVAGHIV) threads the bilayer. Residues 444-447 (HSLG) are Lumenal, vesicle-facing. Residues 448–468 (FEQLSLGMGLANLLYAPVLLL) traverse the membrane as a helical segment. The Cytoplasmic portion of the chain corresponds to 469–530 (LRNVGLLTRS…EDDYNYYSRS (62 aa)). Residues 471–530 (NVGLLTRSRSERDVLLDEPPQGLYDAVRLREVQGKDGGEPCSPPGPFDGCEDDYNYYSRS) are mediates interaction with SEC14L1. The tract at residues 504–530 (GKDGGEPCSPPGPFDGCEDDYNYYSRS) is disordered.

This sequence belongs to the major facilitator superfamily. Vesicular transporter family. Interacts with SEC14L1. As to expression, expressed in the spinal cord, brain (excluding the cerebellum), brain stem and cholinergic tissues. Not expressed in peripheral tissues such as liver and kidney.

It localises to the cytoplasmic vesicle. The protein localises to the secretory vesicle. Its subcellular location is the synaptic vesicle membrane. It catalyses the reaction acetylcholine(out) + 2 H(+)(in) = acetylcholine(in) + 2 H(+)(out). The catalysed reaction is choline(in) + 2 H(+)(out) = choline(out) + 2 H(+)(in). It carries out the reaction serotonin(in) + 2 H(+)(out) = serotonin(out) + 2 H(+)(in). Its function is as follows. Electrogenic antiporter that exchanges one cholinergic neurotransmitter, acetylcholine or choline, with two intravesicular protons across the membrane of synaptic vesicles. Uses the electrochemical proton gradient established by the V-type proton-pump ATPase to store neurotransmitters inside the vesicles prior to their release via exocytosis. Determines cholinergic vesicular quantal size at presynaptic nerve terminals in developing neuro-muscular junctions with an impact on motor neuron differentiation and innervation pattern. Part of forebrain cholinergic system, regulates hippocampal synapse transmissions that underlie spatial memory formation. Can transport serotonin. The protein is Vesicular acetylcholine transporter (Slc18a3) of Mus musculus (Mouse).